A 565-amino-acid polypeptide reads, in one-letter code: NAD-dependent malic enzyme (565 aa).

Tyrosine 104 serves as the catalytic Proton donor. Arginine 157 is an NAD(+) binding site. Lysine 175 acts as the Proton acceptor in catalysis. The a divalent metal cation site is built by glutamate 246, aspartate 247, and aspartate 270. Residues aspartate 270 and asparagine 418 each coordinate NAD(+).

It belongs to the malic enzymes family. In terms of assembly, homotetramer. Requires Mg(2+) as cofactor. Mn(2+) is required as a cofactor.

It carries out the reaction (S)-malate + NAD(+) = pyruvate + CO2 + NADH. The enzyme catalyses oxaloacetate + H(+) = pyruvate + CO2. This Escherichia coli O127:H6 (strain E2348/69 / EPEC) protein is NAD-dependent malic enzyme.